An 81-amino-acid chain; its full sequence is Cortexin-2 (81 aa).

The chain crosses the membrane as a helical span at residues 29 to 49; sequence TGFAFVGILCIFLGLLIIRCF.

This sequence belongs to the cortexin family.

The protein localises to the membrane. In Homo sapiens (Human), this protein is Cortexin-2 (CTXN2).